We begin with the raw amino-acid sequence, 159 residues long: UPF0756 membrane protein PTH_1668 (159 aa).

4 consecutive transmembrane segments (helical) span residues 15-37 (ILITLLFLGLFGRSNLVVSSSCI), 61-81 (LGLVLLMLHILSPVATEKLTI), 117-137 (PEIIFGLTVGTVLGILFLRGT), and 138-158 (PCGPVMAAAVTAVFLQIASLF).

The protein belongs to the UPF0756 family.

Its subcellular location is the cell membrane. This is UPF0756 membrane protein PTH_1668 from Pelotomaculum thermopropionicum (strain DSM 13744 / JCM 10971 / SI).